The following is a 298-amino-acid chain: Elongation factor Ts (298 aa).

The tract at residues 80–83 (TDFV) is involved in Mg(2+) ion dislocation from EF-Tu.

This sequence belongs to the EF-Ts family.

Its subcellular location is the cytoplasm. Its function is as follows. Associates with the EF-Tu.GDP complex and induces the exchange of GDP to GTP. It remains bound to the aminoacyl-tRNA.EF-Tu.GTP complex up to the GTP hydrolysis stage on the ribosome. The sequence is that of Elongation factor Ts from Acidovorax sp. (strain JS42).